Consider the following 345-residue polypeptide: Eukaryotic translation initiation factor 3 subunit F (345 aa).

The MPN domain maps to 30 to 166 (VVIQPQAIFS…TRAYISAPVG (137 aa)). The segment at 310-345 (EGASAEAGAQRGQRGGRGGRGGQQRTQERASEEVRA) is disordered. Residues 312–321 (ASAEAGAQRG) show a composition bias toward low complexity. Residues 322–331 (QRGGRGGRGG) show a composition bias toward gly residues. Over residues 335-345 (TQERASEEVRA) the composition is skewed to basic and acidic residues.

The protein belongs to the eIF-3 subunit F family. Component of the eukaryotic translation initiation factor 3 (eIF-3) complex.

The protein localises to the cytoplasm. Its function is as follows. Component of the eukaryotic translation initiation factor 3 (eIF-3) complex, which is involved in protein synthesis of a specialized repertoire of mRNAs and, together with other initiation factors, stimulates binding of mRNA and methionyl-tRNAi to the 40S ribosome. The eIF-3 complex specifically targets and initiates translation of a subset of mRNAs involved in cell proliferation. The sequence is that of Eukaryotic translation initiation factor 3 subunit F from Neosartorya fischeri (strain ATCC 1020 / DSM 3700 / CBS 544.65 / FGSC A1164 / JCM 1740 / NRRL 181 / WB 181) (Aspergillus fischerianus).